A 448-amino-acid polypeptide reads, in one-letter code: tRNA modification GTPase MnmE (448 aa).

(6S)-5-formyl-5,6,7,8-tetrahydrofolate is bound by residues Arg22, Glu83, and Arg122. The TrmE-type G domain maps to 219-369; that stretch reads GVKTVIVGRP…LESEILKTLK (151 aa). Asn229 is a binding site for K(+). Residues 229-234, 248-254, and 273-276 contribute to the GTP site; these read NVGKSS, SDIAGTT, and DTAG. Position 233 (Ser233) interacts with Mg(2+). K(+) is bound by residues Ser248, Ile250, and Thr253. Thr254 serves as a coordination point for Mg(2+). Position 448 (Lys448) interacts with (6S)-5-formyl-5,6,7,8-tetrahydrofolate.

This sequence belongs to the TRAFAC class TrmE-Era-EngA-EngB-Septin-like GTPase superfamily. TrmE GTPase family. Homodimer. Heterotetramer of two MnmE and two MnmG subunits. K(+) serves as cofactor.

The protein resides in the cytoplasm. Its function is as follows. Exhibits a very high intrinsic GTPase hydrolysis rate. Involved in the addition of a carboxymethylaminomethyl (cmnm) group at the wobble position (U34) of certain tRNAs, forming tRNA-cmnm(5)s(2)U34. The protein is tRNA modification GTPase MnmE of Acholeplasma laidlawii (strain PG-8A).